We begin with the raw amino-acid sequence, 170 residues long: Adenine phosphoribosyltransferase (170 aa).

This sequence belongs to the purine/pyrimidine phosphoribosyltransferase family. In terms of assembly, homodimer.

The protein localises to the cytoplasm. It catalyses the reaction AMP + diphosphate = 5-phospho-alpha-D-ribose 1-diphosphate + adenine. Its pathway is purine metabolism; AMP biosynthesis via salvage pathway; AMP from adenine: step 1/1. Functionally, catalyzes a salvage reaction resulting in the formation of AMP, that is energically less costly than de novo synthesis. The sequence is that of Adenine phosphoribosyltransferase from Acaryochloris marina (strain MBIC 11017).